The following is a 508-amino-acid chain: p-aminobenzoyl-glutamate transport protein (508 aa).

The next 13 helical transmembrane spans lie at 30-50, 85-105, 121-139, 140-159, 164-184, 211-231, 261-281, 303-323, 343-363, 382-402, 405-425, 439-459, and 479-499; these read FLLF…LSAF, FSGF…GLAE, VNAR…FSHI, SSDA…FLAV, VAGL…NLLI, IDNW…GGLI, GLRI…LMVI, GIVP…GIAT, MAGF…FNWS, LSGI…CMFI, GSAI…LLGF, SSVL…GFLQ, and LIFL…GLPI.

Its subcellular location is the cell inner membrane. It carries out the reaction N-(4-aminobenzoyl)-L-glutamate(in) + H(+)(in) = N-(4-aminobenzoyl)-L-glutamate(out) + H(+)(out). Its activity is regulated as follows. Completely inhibited by 100 nM sodium azide and by the proton ionophore carbonyl cyanide m-chlorophenylhydrazone (CCCP). Is also strongly inhibited by 100 mM potassium fluoride. Functionally, essential for aminobenzoyl-glutamate utilization. It catalyzes the concentration-dependent uptake of p-aminobenzoyl-glutamate (PABA-GLU) into the cell and allows accumulation of PABA-GLU to a concentration enabling AbgAB to catalyze cleavage into p-aminobenzoate and glutamate. It also seems to increase the sensitivity to low levels of aminobenzoyl-glutamate. May actually serve physiologically as a transporter for some other molecule, perhaps a dipeptide, and that it transports p-aminobenzoyl-glutamate as a secondary activity. The physiological role of abgABT should be clarified. The chain is p-aminobenzoyl-glutamate transport protein from Escherichia coli (strain K12).